The primary structure comprises 496 residues: Transcription factor CP2 (496 aa).

In terms of domain architecture, Grh/CP2 DB spans 61-300 (ENKILPFQYV…SPGFNSSHSS (240 aa)). A DNA-binding region spans residues 133–386 (EHQQLEGWRW…LFNALKGRMV (254 aa)). Disordered stretches follow at residues 238–268 (FKPK…YQPS) and 296–327 (SSHS…LLPT). Residues 241-265 (KGADRKQKTDREKMEKRTPHEKEKY) are compositionally biased toward basic and acidic residues.

The protein belongs to the grh/CP2 family. CP2 subfamily. Component of the SSP (stage selector protein) complex, which appears to be a heteromer of TFCP2 and 2 copies of NFE4. As to expression, expressed in the epiblast at the pre-primitive streak stage. At the primitive streak stage, expressed in the extending primitive streak and in the prospective neural plate. At stages 7 and 8, expressed in the neural folds, somites and in the regressing primitive streak. At stage 12, ubiquitously expressed in the whole embryo.

Its subcellular location is the nucleus. Its function is as follows. Binds the B-response element 5'-CAAGTCCAGGCAAGT-3' of the ENS1/ERNI promoter. May be the major transcription activator thus being essential for its expression. The chain is Transcription factor CP2 (TFCP2) from Gallus gallus (Chicken).